Here is an 80-residue protein sequence, read N- to C-terminus: Small ribosomal subunit protein bS18 (80 aa).

It belongs to the bacterial ribosomal protein bS18 family. Part of the 30S ribosomal subunit. Forms a tight heterodimer with protein bS6.

In terms of biological role, binds as a heterodimer with protein bS6 to the central domain of the 16S rRNA, where it helps stabilize the platform of the 30S subunit. The polypeptide is Small ribosomal subunit protein bS18 (Beijerinckia indica subsp. indica (strain ATCC 9039 / DSM 1715 / NCIMB 8712)).